Here is a 127-residue protein sequence, read N- to C-terminus: Urotensin-2 (127 aa).

The signal sequence occupies residues methionine 1–cysteine 16. The propeptide occupies serine 17 to phenylalanine 111. Residues cysteine 121 and cysteine 126 are joined by a disulfide bond.

This sequence belongs to the urotensin-2 family. As to expression, central nervous system. Spinal cord.

It is found in the secreted. Its function is as follows. Involved in smooth muscle stimulating and ion mobilizing activities. It has a suggested role as a corticotropin-releasing factor. This Pelophylax ridibundus (Marsh frog) protein is Urotensin-2 (UTS2).